The sequence spans 120 residues: Ribosome-binding factor A (120 aa).

Belongs to the RbfA family. Monomer. Binds 30S ribosomal subunits, but not 50S ribosomal subunits or 70S ribosomes.

The protein resides in the cytoplasm. In terms of biological role, one of several proteins that assist in the late maturation steps of the functional core of the 30S ribosomal subunit. Associates with free 30S ribosomal subunits (but not with 30S subunits that are part of 70S ribosomes or polysomes). Required for efficient processing of 16S rRNA. May interact with the 5'-terminal helix region of 16S rRNA. This Rickettsia africae (strain ESF-5) protein is Ribosome-binding factor A.